Here is a 322-residue protein sequence, read N- to C-terminus: NADH-quinone oxidoreductase subunit H (322 aa).

Helical transmembrane passes span 12 to 32 (IGKA…MSFI), 79 to 99 (IFVL…AVVP), 111 to 131 (VGLL…LFAG), 151 to 171 (LSYE…TGSF), 183 to 203 (LWNV…GVAV), 234 to 254 (FFVG…TLFF), 262 to 282 (LPPF…FILL), and 301 to 321 (VCLP…LMNA).

The protein belongs to the complex I subunit 1 family. As to quaternary structure, NDH-1 is composed of 14 different subunits. Subunits NuoA, H, J, K, L, M, N constitute the membrane sector of the complex.

It localises to the cell inner membrane. It catalyses the reaction a quinone + NADH + 5 H(+)(in) = a quinol + NAD(+) + 4 H(+)(out). NDH-1 shuttles electrons from NADH, via FMN and iron-sulfur (Fe-S) centers, to quinones in the respiratory chain. The immediate electron acceptor for the enzyme in this species is believed to be ubiquinone. Couples the redox reaction to proton translocation (for every two electrons transferred, four hydrogen ions are translocated across the cytoplasmic membrane), and thus conserves the redox energy in a proton gradient. This subunit may bind ubiquinone. This Aeromonas hydrophila subsp. hydrophila (strain ATCC 7966 / DSM 30187 / BCRC 13018 / CCUG 14551 / JCM 1027 / KCTC 2358 / NCIMB 9240 / NCTC 8049) protein is NADH-quinone oxidoreductase subunit H.